A 329-amino-acid chain; its full sequence is MTKTTILLLCGGGSSEHEISLVSANYIQQQLELTPEFHVIRVEMKKEGWFSEQGALVYLDTNSATLNSDKASYPIDFVVPCIHGFPGETGDIQSMLELAGIPYLGCGPEASANSFNKITSKLWYDALDIPNTPYLFLTQNTPSSIDKAKQAFGHWGSIFVKAARQGSSVGCYKVTTEDQIAPAIEAAFGFSEQVLVEQAVKPRELEVSAYEMNGKLYISKPGEVIAPEGTFYSYEEKYSANSHARTVLEAENLTEKHKELIQTYAERVFIHMKLRHLSRIDFFLTQEGQIYLNEVNTFPGMTPISMFPKMLEHNGHRFSEFLAQCVTNT.

Residues 121-327 (KLWYDALDIP…FSEFLAQCVT (207 aa)) form the ATP-grasp domain. An ATP-binding site is contributed by 151–206 (AFGHWGSIFVKAARQGSSVGCYKVTTEDQIAPAIEAAFGFSEQVLVEQAVKPRELE). 3 residues coordinate Mg(2+): Asp281, Glu294, and Asn296.

This sequence belongs to the D-alanine--D-alanine ligase family. It depends on Mg(2+) as a cofactor. Mn(2+) is required as a cofactor.

The protein resides in the cytoplasm. The enzyme catalyses 2 D-alanine + ATP = D-alanyl-D-alanine + ADP + phosphate + H(+). Its pathway is cell wall biogenesis; peptidoglycan biosynthesis. In terms of biological role, cell wall formation. This is D-alanine--D-alanine ligase from Vibrio cholerae serotype O1 (strain ATCC 39541 / Classical Ogawa 395 / O395).